Reading from the N-terminus, the 214-residue chain is ATP phosphoribosyltransferase (214 aa).

This sequence belongs to the ATP phosphoribosyltransferase family. Short subfamily. In terms of assembly, heteromultimer composed of HisG and HisZ subunits.

It is found in the cytoplasm. It carries out the reaction 1-(5-phospho-beta-D-ribosyl)-ATP + diphosphate = 5-phospho-alpha-D-ribose 1-diphosphate + ATP. It functions in the pathway amino-acid biosynthesis; L-histidine biosynthesis; L-histidine from 5-phospho-alpha-D-ribose 1-diphosphate: step 1/9. In terms of biological role, catalyzes the condensation of ATP and 5-phosphoribose 1-diphosphate to form N'-(5'-phosphoribosyl)-ATP (PR-ATP). Has a crucial role in the pathway because the rate of histidine biosynthesis seems to be controlled primarily by regulation of HisG enzymatic activity. The sequence is that of ATP phosphoribosyltransferase from Alcanivorax borkumensis (strain ATCC 700651 / DSM 11573 / NCIMB 13689 / SK2).